Here is a 503-residue protein sequence, read N- to C-terminus: Aromatase (503 aa).

3 helical membrane-spanning segments follow: residues 19 to 39 (EVVP…LLVW), 53 to 73 (FLGI…IGSA), and 303 to 323 (MLIA…FLIA). Positions 309 and 374 each coordinate substrate. Residue C437 participates in heme binding.

Belongs to the cytochrome P450 family. Heme serves as cofactor.

The protein resides in the endoplasmic reticulum membrane. It localises to the microsome membrane. The enzyme catalyses testosterone + 3 reduced [NADPH--hemoprotein reductase] + 3 O2 = 17beta-estradiol + formate + 3 oxidized [NADPH--hemoprotein reductase] + 4 H2O + 4 H(+). The catalysed reaction is androst-4-ene-3,17-dione + 3 reduced [NADPH--hemoprotein reductase] + 3 O2 = estrone + formate + 3 oxidized [NADPH--hemoprotein reductase] + 4 H2O + 4 H(+). It carries out the reaction androst-4-ene-3,17-dione + reduced [NADPH--hemoprotein reductase] + O2 = 19-hydroxyandrost-4-ene-3,17-dione + oxidized [NADPH--hemoprotein reductase] + H2O + H(+). It catalyses the reaction 19-hydroxyandrost-4-ene-3,17-dione + reduced [NADPH--hemoprotein reductase] + O2 = 19-oxo-androst-4-ene-3,17-dione + oxidized [NADPH--hemoprotein reductase] + 2 H2O + H(+). The enzyme catalyses 19-oxo-androst-4-ene-3,17-dione + reduced [NADPH--hemoprotein reductase] + O2 = estrone + formate + oxidized [NADPH--hemoprotein reductase] + H2O + 2 H(+). The catalysed reaction is estrone + reduced [NADPH--hemoprotein reductase] + O2 = 2-hydroxyestrone + oxidized [NADPH--hemoprotein reductase] + H2O + H(+). It carries out the reaction 17beta-hydroxy-5alpha-androstan-3-one + reduced [NADPH--hemoprotein reductase] + O2 = 17beta,19-dihydroxy-3-oxo-5alpha-androstanone + oxidized [NADPH--hemoprotein reductase] + H2O + H(+). It catalyses the reaction 17beta,19-dihydroxy-3-oxo-5alpha-androstanone + reduced [NADPH--hemoprotein reductase] + O2 = 17beta-hydroxy-3,19-dioxo-5alpha-androstanone + oxidized [NADPH--hemoprotein reductase] + 2 H2O + H(+). The enzyme catalyses 17beta-hydroxy-3,19-dioxo-5alpha-androstanone + reduced [NADPH--hemoprotein reductase] + O2 = 17beta-hydroxy-3-oxo-19-nor-5alpha-androst-1-ene + formate + oxidized [NADPH--hemoprotein reductase] + H2O + 2 H(+). Its pathway is steroid hormone biosynthesis. In terms of biological role, a cytochrome P450 monooxygenase that catalyzes the conversion of C19 androgens, androst-4-ene-3,17-dione (androstenedione) and testosterone to the C18 estrogens, estrone and estradiol, respectively. Catalyzes three successive oxidations of C19 androgens: two conventional oxidations at C19 yielding 19-hydroxy and 19-oxo/19-aldehyde derivatives, followed by a third oxidative aromatization step that involves C1-beta hydrogen abstraction combined with cleavage of the C10-C19 bond to yield a phenolic A ring and formic acid. Alternatively, the third oxidative reaction yields a 19-norsteroid and formic acid. Converts dihydrotestosterone to delta1,10-dehydro 19-nordihydrotestosterone and may play a role in homeostasis of this potent androgen. Also displays 2-hydroxylase activity toward estrone. Mechanistically, uses molecular oxygen inserting one oxygen atom into a substrate, and reducing the second into a water molecule, with two electrons provided by NADPH via cytochrome P450 reductase (CPR; NADPH-ferrihemoprotein reductase). This Capra hircus (Goat) protein is Aromatase (CYP19A1).